The primary structure comprises 229 residues: MDTTTLTDHHFLHILQLASSALPVGAYSYSEGLETLVENGTITSQSTLQQWLEAELSYGAIRLEAAVMVRAYQAATMDDMETLCYWNLWLSAARETQELRNSSWQMGRSLMQLLGKIQPEILPLANAVGNPCNYAIAFGIASAHWQINIQAALLAYLHSWATNLITAGVKLIPLGQTAGQELLLQLQPLISHATVEIMSLKDDELSCCSWGLSLASMQHETQYTRLFRS.

This sequence belongs to the UreF family. In terms of assembly, ureD, UreF and UreG form a complex that acts as a GTP-hydrolysis-dependent molecular chaperone, activating the urease apoprotein by helping to assemble the nickel containing metallocenter of UreC. The UreE protein probably delivers the nickel.

The protein resides in the cytoplasm. Functionally, required for maturation of urease via the functional incorporation of the urease nickel metallocenter. In Nostoc sp. (strain PCC 7120 / SAG 25.82 / UTEX 2576), this protein is Urease accessory protein UreF.